The following is a 319-amino-acid chain: Taste receptor type 2 member 14 (319 aa).

Topologically, residues 1–7 (MDGVIKS) are extracellular. A helical transmembrane segment spans residues 8-28 (IFTFILILEFIIGNLGNSFIV). Residues 29 to 55 (LVNCIDWVKRRKISLVDQLLIALAISR) lie on the Cytoplasmic side of the membrane. The helical transmembrane segment at 56 to 76 (ISLVWSIFGSWCVSVVFPALF) threads the bilayer. Residues 77–87 (ATEKLLRMLTN) are Extracellular-facing. Residues Thr86 and Trp89 each coordinate cholesterol. A helical membrane pass occupies residues 88 to 108 (IWTVTNHFSVWLATILGTFYF). At 109-129 (LKIANFSNSIFLYLKWRVKKV) the chain is on the cytoplasmic side. Residues 130-150 (VLVLLLVTLVLLFLNILLINI) form a helical membrane-spanning segment. The Extracellular segment spans residues 151 to 184 (HINASINGYRGNMTCSSASCNFIRFSSAIALTST). N-linked (GlcNAc...) asparagine glycosylation is found at Asn153 and Asn162. Ala180 lines the cholesterol pocket. Residues 185–205 (VFILIPFTLSLATFLLLSFSL) traverse the membrane as a helical segment. Residues 206–232 (WKHRKKMQHTVKGYRDVSTKAHRGVMQ) lie on the Cytoplasmic side of the membrane. A helical transmembrane segment spans residues 233-253 (TVITFLLLYAVFFLTFFVSIW). Residues 254–261 (ISERLKEN) are Extracellular-facing. A helical membrane pass occupies residues 262–282 (QIIILSEMMGLAYPSGHSCVL). Ile265 and Glu268 together coordinate cholesterol. Over 283-317 (ILGNKKLRQASLSVLWWLRYRFKDGELSGHKEFRE) the chain is Cytoplasmic.

The protein belongs to the G-protein coupled receptor T2R family. As to quaternary structure, core component of the TAS2R14-GNAI1 complex, consisting of TAS2R14, GNAI1, GNB1 and GNG2; within the complex interacts with GNAI1. Core component of the TAS2R14-GNAT3 complex, consisting of TAS2R14, GNAT3, GNB1 and GNG2; within the complex interacts with GNAT3. Core component of the TAS2R14-GNAS2 complex, consisting of TAS2R14, GNAS2, GNB1 and GNG2; within the complex interacts with GNAS2.

The protein resides in the membrane. The enzyme catalyses Ca(2+)(in) = Ca(2+)(out). The catalysed reaction is 3',5'-cyclic AMP(in) = 3',5'-cyclic AMP(out). Basal activity is enhanced by binding to bitter tastants, such as flufenamic acid and aristolochic acid. Regulated by cholesterol in a concentration-dependent manner. Gustducin-linked G-protein coupled receptor that plays a role in the perception of bitterness. The activity of this receptor stimulates GNAT3, activating the gustducin G-protein pathway. Likely plays a role in sensing the chemical composition of the gastrointestinal content and other extra-oral tissues via the inhibitory G-protein pathways. In Papio hamadryas (Hamadryas baboon), this protein is Taste receptor type 2 member 14 (TAS2R14).